Reading from the N-terminus, the 129-residue chain is Protein BUNDLE SHEATH DEFECTIVE 2, chloroplastic (129 aa).

The N-terminal 43 residues, 1–43 (MAATASLTTTAPSPPALLKASAPLLISFRPVSRHCKNLCIKTK), are a transit peptide targeting the chloroplast. The segment at 49–123 (QSAKKHQKVK…AGFLGGFLST (75 aa)) adopts a CR-type zinc-finger fold. 10 residues coordinate Zn(2+): C62, C65, N68, C73, C76, C97, C100, E105, C108, and C111.

Belongs to the BSD2 chaperone family. In terms of assembly, interacts with the RuBisCo large subunit (RbcL) assembled as an intermediate complex made of eight RbcL and eight BSD2 subunits. In terms of tissue distribution, expressed in shoot tissues, in both bundle sheath and mesophyll cells.

Its subcellular location is the plastid. It localises to the chloroplast stroma. Its function is as follows. Chloroplast chaperone required for RuBisCo complex biogenesis and translational regulation of the RuBisCo large subunit (RbcL). Stabilizes an end-state assembly intermediate of eight RbcL subunits until the small subunits (RBCSs) become available to produce a complete stable RuBisCo complex containing eight small and eight large subunits. Involved in the differentiation of bundle sheath cells, especially chloroplast structure. This Zea mays (Maize) protein is Protein BUNDLE SHEATH DEFECTIVE 2, chloroplastic.